We begin with the raw amino-acid sequence, 152 residues long: MTITDLVLILFIAALLAYALYDQFIMPRRNGPTLLSIALLRRGRVDSVIFVGLVAILIYNNVTSHGAQMTTWLLSALALMGFYIFWIRTPRIIFKQRGFFFANVWIEYNRIKEMNLSEDGVLVMQLEQRRLLIRVRNINDLEKIYKLLIENQ.

3 consecutive transmembrane segments (helical) span residues 6–26, 45–65, and 67–87; these read LVLI…QFIM, VDSV…VTSH, and AQMT…IFWI.

This sequence belongs to the UPF0266 family.

It localises to the cell inner membrane. The chain is UPF0266 membrane protein YobD from Salmonella agona (strain SL483).